We begin with the raw amino-acid sequence, 300 residues long: 4-hydroxy-tetrahydrodipicolinate synthase (300 aa).

Residue threonine 45 coordinates pyruvate. Tyrosine 140 functions as the Proton donor/acceptor in the catalytic mechanism. Lysine 169 (schiff-base intermediate with substrate) is an active-site residue. Pyruvate is bound at residue isoleucine 210.

The protein belongs to the DapA family. Homotetramer; dimer of dimers.

It is found in the cytoplasm. It catalyses the reaction L-aspartate 4-semialdehyde + pyruvate = (2S,4S)-4-hydroxy-2,3,4,5-tetrahydrodipicolinate + H2O + H(+). It participates in amino-acid biosynthesis; L-lysine biosynthesis via DAP pathway; (S)-tetrahydrodipicolinate from L-aspartate: step 3/4. In terms of biological role, catalyzes the condensation of (S)-aspartate-beta-semialdehyde [(S)-ASA] and pyruvate to 4-hydroxy-tetrahydrodipicolinate (HTPA). The polypeptide is 4-hydroxy-tetrahydrodipicolinate synthase (Helicobacter pylori (strain J99 / ATCC 700824) (Campylobacter pylori J99)).